Reading from the N-terminus, the 1782-residue chain is Atrochrysone carboxylic acid synthase (1782 aa).

Residues 41–270 are N-terminal acylcarrier protein transacylase domain (SAT); the sequence is HTYTKDRRYP…ALPVYGGLCH (230 aa). The region spanning 407-841 is the Ketosynthase family 3 (KS3) domain; the sequence is QSKIAIVGMS…GGNSTLAIEE (435 aa). Residues C580, H716, and H759 each act as for beta-ketoacyl synthase activity in the active site. The segment at 946-1266 is malonyl-CoA:ACP transacylase (MAT) domain; sequence FAFTGQGSSY…LGILHCAGVP (321 aa). Residues 1331–1648 form a product template (PT) domain region; the sequence is TSTVQQIIHE…RILLNRFFSA (318 aa). The interval 1335–1468 is N-terminal hotdog fold; the sequence is QQIIHEQYDG…ATVYYEEASD (134 aa). The 309-residue stretch at 1335-1643 folds into the PKS/mFAS DH domain; sequence QQIIHEQYDG…FRRYPRILLN (309 aa). The active-site Proton acceptor; for dehydratase activity is H1367. Residues 1495–1643 form a C-terminal hotdog fold region; the sequence is VANRFTRRMA…FRRYPRILLN (149 aa). Residue D1554 is the Proton donor; for dehydratase activity of the active site. The tract at residues 1653–1703 is disordered; the sequence is ARKSTPATSAPAPAPPAGSEALQPKAAPASTPAAPASADAPTTNGVKAAAE. The span at 1678–1695 shows a compositional bias: low complexity; that stretch reads AAPASTPAAPASADAPTT. The Carrier domain occupies 1704–1781; the sequence is PDANSTAAKA…DLKSWLLEYY (78 aa). An O-(pantetheine 4'-phosphoryl)serine modification is found at S1741.

As to expression, specifically expressed in conidia.

The catalysed reaction is holo-[ACP] + 8 malonyl-CoA + 8 H(+) = atrochrysone carboxyl-[ACP] + 8 CO2 + 8 CoA + 2 H2O. Its pathway is secondary metabolite biosynthesis. Functionally, non-reducing polyketide synthase; part of the gene cluster that mediates the biosynthesis of trypacidin, a mycotoxin with antiprotozoal activity and that plays a role in the infection process. The pathway begins with the synthesis of atrochrysone thioester by the polyketide synthase (PKS) tpcC. The atrochrysone carboxyl ACP thioesterase tpcB then breaks the thioester bond and releases the atrochrysone carboxylic acid from tpcC. The decarboxylase tpcK converts atrochrysone carboxylic acid to atrochrysone which is further reduced into emodin anthrone. The next step is performed by the emodin anthrone oxygenase tpcL that catalyzes the oxidation of emodin anthrone to emodin. Emodin O-methyltransferase encoded by tpcA catalyzes methylation of the 8-hydroxy group of emodin to form questin. Ring cleavage of questin by questin oxidase tpcI leads to desmethylsulochrin via several intermediates including questin epoxide. Another methylation step catalyzed by tpcM leads to the formation of sulochrin which is further converted to monomethylsulfochrin by tpcH. Finally, the tpcJ catalyzes the conversion of monomethylsulfochrin to trypacidin. Trypacidin is toxic for human pulmonary and bronchial epithelial cells by initiating the intracellular formation of nitric oxide (NO) and hydrogen peroxide (H(2)O(2)), thus triggering host necrotic cell death. The trypacidin pathway is also able to produce endocrocin via a distinct route from the endocrocin Enc pathway. The sequence is that of Atrochrysone carboxylic acid synthase from Aspergillus fumigatus (strain ATCC MYA-4609 / CBS 101355 / FGSC A1100 / Af293) (Neosartorya fumigata).